The primary structure comprises 518 residues: Xaa-Pro aminopeptidase 3 (518 aa).

Residues 1-48 (MNNICKLNKFIISKSSSSLSSTSSKIKTNCLIKNAKMFSSSLNLNRFY) constitute a mitochondrion transit peptide. Residues Y314, D345, D356, H434, H441, E461, and E485 each contribute to the substrate site. Mn(2+) contacts are provided by D345, D356, and H434. Residues E461 and E485 each coordinate Mn(2+).

It belongs to the peptidase M24B family. Homodimer. It depends on Mn(2+) as a cofactor.

Its subcellular location is the mitochondrion. The protein resides in the cytoplasm. It carries out the reaction Release of any N-terminal amino acid, including proline, that is linked to proline, even from a dipeptide or tripeptide.. Its function is as follows. Catalyzes the removal of a penultimate prolyl residue from the N-termini of peptides, such as Leu-Pro-Ala. Also shows low activity towards peptides with Ala or Ser at the P1 position. This is Xaa-Pro aminopeptidase 3 (xpnpep3) from Dictyostelium discoideum (Social amoeba).